Reading from the N-terminus, the 189-residue chain is Probable nicotinate-nucleotide adenylyltransferase (189 aa).

The protein belongs to the NadD family.

The catalysed reaction is nicotinate beta-D-ribonucleotide + ATP + H(+) = deamido-NAD(+) + diphosphate. Its pathway is cofactor biosynthesis; NAD(+) biosynthesis; deamido-NAD(+) from nicotinate D-ribonucleotide: step 1/1. Functionally, catalyzes the reversible adenylation of nicotinate mononucleotide (NaMN) to nicotinic acid adenine dinucleotide (NaAD). The protein is Probable nicotinate-nucleotide adenylyltransferase of Ruegeria sp. (strain TM1040) (Silicibacter sp.).